Consider the following 649-residue polypeptide: 2-hydroxyacyl-CoA lyase 2 (649 aa).

The helical transmembrane segment at 2–21 threads the bilayer; it reads FHLIPFVVAFLLVFLTWFLI. Glu-84 contributes to the thiamine diphosphate binding site. The interval 474–554 is thiamine pyrophosphate binding; it reads DFVGSAAYIL…AIGVIGNDAC (81 aa). Mg(2+) contacts are provided by Asp-525 and Asn-551.

This sequence belongs to the TPP enzyme family. The cofactor is Mg(2+). It depends on thiamine diphosphate as a cofactor.

The protein localises to the endoplasmic reticulum membrane. The enzyme catalyses 2-hydroxyoctadecanoyl-CoA = heptadecanal + formyl-CoA. It carries out the reaction (2R)-hydroxyhexadecanoyl-CoA = pentadecanal + formyl-CoA. Endoplasmic reticulum 2-OH acyl-CoA lyase involved in the cleavage (C1 removal) reaction in the fatty acid alpha-oxydation in a thiamine pyrophosphate (TPP)-dependent manner. Involved in the phytosphingosine degradation pathway. The polypeptide is 2-hydroxyacyl-CoA lyase 2 (ilvbl) (Xenopus laevis (African clawed frog)).